A 274-amino-acid chain; its full sequence is Penicillin-insensitive murein endopeptidase (274 aa).

A signal peptide spans 1-19 (MKKTAIALLAWFVSSASLA). Intrachain disulfides connect Cys44-Cys265, Cys187-Cys235, and Cys216-Cys223. 6 residues coordinate Zn(2+): His110, His113, Asp120, Asp147, His150, and His211. The disordered stretch occupies residues 225–274 (DQPLPPPGDGCGAELQSWFEPPKLGTTKPEKKTPPPLPPSCQALLDEHVL).

This sequence belongs to the peptidase M74 family. As to quaternary structure, dimer. The cofactor is Zn(2+).

It is found in the periplasm. Murein endopeptidase that cleaves the D-alanyl-meso-2,6-diamino-pimelyl amide bond that connects peptidoglycan strands. Likely plays a role in the removal of murein from the sacculus. The sequence is that of Penicillin-insensitive murein endopeptidase from Salmonella paratyphi B (strain ATCC BAA-1250 / SPB7).